A 168-amino-acid polypeptide reads, in one-letter code: ATP synthase subunit b (168 aa).

Residues 11 to 31 (NTVLGNIIVVSGAFIILLVLL) traverse the membrane as a helical segment.

It belongs to the ATPase B chain family. F-type ATPases have 2 components, F(1) - the catalytic core - and F(0) - the membrane proton channel. F(1) has five subunits: alpha(3), beta(3), gamma(1), delta(1), epsilon(1). F(0) has three main subunits: a(1), b(2) and c(10-14). The alpha and beta chains form an alternating ring which encloses part of the gamma chain. F(1) is attached to F(0) by a central stalk formed by the gamma and epsilon chains, while a peripheral stalk is formed by the delta and b chains.

The protein resides in the cell membrane. Functionally, f(1)F(0) ATP synthase produces ATP from ADP in the presence of a proton or sodium gradient. F-type ATPases consist of two structural domains, F(1) containing the extramembraneous catalytic core and F(0) containing the membrane proton channel, linked together by a central stalk and a peripheral stalk. During catalysis, ATP synthesis in the catalytic domain of F(1) is coupled via a rotary mechanism of the central stalk subunits to proton translocation. Component of the F(0) channel, it forms part of the peripheral stalk, linking F(1) to F(0). In Lactococcus lactis subsp. lactis (strain IL1403) (Streptococcus lactis), this protein is ATP synthase subunit b.